We begin with the raw amino-acid sequence, 343 residues long: Methionine import ATP-binding protein MetN (343 aa).

Positions 2–241 constitute an ABC transporter domain; the sequence is IKLSNITKVF…PKTPLAQKFI (240 aa). Residue 40 to 46 participates in ATP binding; it reads SGAGKST. The interval 265-343 is C2 domain; the sequence is CVPMLRLEFT…HVKVEVLGYV (79 aa). Residues 278 to 283 and 295 to 296 contribute to the L-methionine site; these read VDAPLL and NI.

The protein belongs to the ABC transporter superfamily. Methionine importer (TC 3.A.1.24) family. As to quaternary structure, the complex is composed of two ATP-binding proteins (MetN), two transmembrane proteins (MetI) and a solute-binding protein (MetQ).

It localises to the cell inner membrane. It carries out the reaction L-methionine(out) + ATP + H2O = L-methionine(in) + ADP + phosphate + H(+). The enzyme catalyses D-methionine(out) + ATP + H2O = D-methionine(in) + ADP + phosphate + H(+). Its activity is regulated as follows. ATPase activity is inhibited by intracellular L-methionine. Binding of methionine to the dimerized C-terminal regulatory domain stabilizes an inward-facing, ATPase-inactive conformation of the transporter, and as a consequence, the rate of ATP hydrolysis decreases. ADP is a competitive inhibitor. Its function is as follows. Part of the ABC transporter complex MetNIQ involved in methionine import. Responsible for energy coupling to the transport system. It has also been shown to be involved in formyl-L-methionine transport. The polypeptide is Methionine import ATP-binding protein MetN (Escherichia coli (strain K12)).